The following is a 23-amino-acid chain: Aurein-4.2 (23 aa).

It belongs to the frog skin active peptide (FSAP) family. Aurein subfamily. Expressed by the skin dorsal glands.

It is found in the secreted. Functionally, has no antimicrobial or anticancer activity. The chain is Aurein-4.2 from Ranoidea aurea (Green and golden bell frog).